The chain runs to 346 residues: Tubulin-specific chaperone C (346 aa).

Met1 is modified (N-acetylmethionine). The segment at 1 to 26 (MESVSCSAAAVRTGDMESQRDLSLVP) is disordered. 2 positions are modified to phosphoserine: Ser80 and Ser168. The tract at residues 140-171 (KTRGKDAASSTKVDAAPGIPPAVESIQDSPLP) is disordered. Residues 171–323 (PKKAEGDLGP…NWNDVDDFNW (153 aa)) form the C-CAP/cofactor C-like domain.

Belongs to the TBCC family. As to quaternary structure, supercomplex made of cofactors A to E. Cofactors A and D function by capturing and stabilizing tubulin in a quasi-native conformation. Cofactor E binds to the cofactor D-tubulin complex; interaction with cofactor C then causes the release of tubulin polypeptides that are committed to the native state. As to expression, expressed in the retina. Expressed in the rod and cone photoreceptors, extending from the inner segments (IS), through the outer nuclear layer (ONL) and into the synapses in the outer plexiform layer (OPL). Strongly expressed to the photoreceptor connecting cilium at the tips of the IS (at protein level).

The protein resides in the cytoplasm. Functionally, tubulin-folding protein; involved in the final step of the tubulin folding pathway. The protein is Tubulin-specific chaperone C (TBCC) of Homo sapiens (Human).